The following is a 57-amino-acid chain: Large ribosomal subunit protein bL32 (57 aa).

Basic residues predominate over residues 1–19; it reads MAVPKRRMSRSNTRSRRSQ. Residues 1-22 are disordered; it reads MAVPKRRMSRSNTRSRRSQWKA.

The protein belongs to the bacterial ribosomal protein bL32 family.

The protein is Large ribosomal subunit protein bL32 of Rhodococcus jostii (strain RHA1).